A 211-amino-acid polypeptide reads, in one-letter code: Large ribosomal subunit protein uL3 (211 aa).

Gln-150 carries the post-translational modification N5-methylglutamine.

The protein belongs to the universal ribosomal protein uL3 family. Part of the 50S ribosomal subunit. Forms a cluster with proteins L14 and L19. Post-translationally, methylated by PrmB.

Its function is as follows. One of the primary rRNA binding proteins, it binds directly near the 3'-end of the 23S rRNA, where it nucleates assembly of the 50S subunit. This is Large ribosomal subunit protein uL3 from Pseudomonas fluorescens (strain SBW25).